The primary structure comprises 408 residues: Probable serine/threonine-protein kinase PBL16 (408 aa).

Gly2 carries the N-myristoyl glycine lipid modification. Cys4 carries the S-palmitoyl cysteine lipid modification. The disordered stretch occupies residues 17 to 50 (ANAKSESPKEQSPTVEDKHIKEVQKLPSNPKEVE). Residues 18-30 (NAKSESPKEQSPT) show a composition bias toward polar residues. Basic and acidic residues predominate over residues 31–40 (VEDKHIKEVQ). Thr65 is subject to Phosphothreonine. The 285-residue stretch at 76 to 360 (FRQDRVLGGG…DIVDSLEPLQ (285 aa)) folds into the Protein kinase domain. ATP contacts are provided by residues 82–90 (LGGGGFGSV) and Lys113. Tyr159 carries the phosphotyrosine modification. Asp209 functions as the Proton acceptor in the catalytic mechanism. 2 positions are modified to phosphoserine: Ser213 and Ser243. Phosphothreonine is present on residues Thr244 and Thr249. Phosphotyrosine is present on Tyr257.

The protein belongs to the protein kinase superfamily. Ser/Thr protein kinase family. Post-translationally, palmitoylation at Cys-4 and Cys-6 are required for plasma membrane location.

The protein resides in the cell membrane. The catalysed reaction is L-seryl-[protein] + ATP = O-phospho-L-seryl-[protein] + ADP + H(+). It carries out the reaction L-threonyl-[protein] + ATP = O-phospho-L-threonyl-[protein] + ADP + H(+). May be involved in plant defense signaling. This Arabidopsis thaliana (Mouse-ear cress) protein is Probable serine/threonine-protein kinase PBL16.